Here is a 106-residue protein sequence, read N- to C-terminus: Toxin-like structure LSTX-D3 (106 aa).

The signal sequence occupies residues 1 to 20 (MMKVLVVVALLVTLISYSSS). The propeptide occupies 21 to 41 (EGIDDLEADELLSLMANEQTR). Cystine bridges form between C45–C60, C52–C69, C59–C85, and C71–C83.

This sequence belongs to the neurotoxin 19 (CSTX) family. 02 (D7) subfamily. As to expression, expressed by the venom gland.

It is found in the secreted. The protein is Toxin-like structure LSTX-D3 of Lycosa singoriensis (Wolf spider).